Here is a 186-residue protein sequence, read N- to C-terminus: Potassium-transporting ATPase KdpC subunit 1 (186 aa).

A helical transmembrane segment spans residues Leu-10–Gly-30.

This sequence belongs to the KdpC family. The system is composed of three essential subunits: KdpA, KdpB and KdpC.

The protein localises to the cell membrane. Part of the high-affinity ATP-driven potassium transport (or Kdp) system, which catalyzes the hydrolysis of ATP coupled with the electrogenic transport of potassium into the cytoplasm. This subunit acts as a catalytic chaperone that increases the ATP-binding affinity of the ATP-hydrolyzing subunit KdpB by the formation of a transient KdpB/KdpC/ATP ternary complex. This chain is Potassium-transporting ATPase KdpC subunit 1, found in Staphylococcus aureus (strain Mu50 / ATCC 700699).